The primary structure comprises 561 residues: Arf-GAP domain and FG repeat-containing protein 1 (561 aa).

One can recognise an Arf-GAP domain in the interval 11–135; that stretch reads EKHLKMLRDM…WYVPPEQAKV (125 aa). A C4-type zinc finger spans residues 29–52; the sequence is CFDCDQRGPTYVNMTVGSFVCTSC. At Ser167 the chain carries Phosphoserine. The interval 171–193 is disordered; that stretch reads LHLNKGTPTQSPVVGRSQGQQQE. The span at 176-191 shows a compositional bias: polar residues; it reads GTPTQSPVVGRSQGQQ. At Thr177 the chain carries Phosphothreonine. 2 positions are modified to phosphoserine: Ser181 and Ser362. Ser367 carries O-linked (GlcNAc) serine glycosylation. Residues 409-451 form a disordered region; sequence PVGASPQTQPASSGPAPFGATPSTNPFVAATGPSAASSTNPFQ. Positions 442-451 are enriched in polar residues; the sequence is SAASSTNPFQ.

In terms of assembly, interacts with EPS15R and EPS15. Interacts with FCHO1. O-glycosylated.

The protein localises to the nucleus. The protein resides in the cytoplasmic vesicle. In terms of biological role, required for vesicle docking or fusion during acrosome biogenesis. May play a role in RNA trafficking or localization. This chain is Arf-GAP domain and FG repeat-containing protein 1 (Agfg1), found in Rattus norvegicus (Rat).